A 242-amino-acid polypeptide reads, in one-letter code: ATP-dependent dethiobiotin synthetase BioD (242 aa).

Position 12-17 (12-17) interacts with ATP; the sequence is SVGKTI. Mg(2+) is bound at residue Thr16. Lys37 is a catalytic residue. Position 66 (Asp66) interacts with ATP. Positions 66 and 124 each coordinate Mg(2+). 184-185 serves as a coordination point for ATP; it reads NR.

Belongs to the dethiobiotin synthetase family. Homodimer. The cofactor is Mg(2+).

It is found in the cytoplasm. It carries out the reaction (7R,8S)-7,8-diammoniononanoate + CO2 + ATP = (4R,5S)-dethiobiotin + ADP + phosphate + 3 H(+). It participates in cofactor biosynthesis; biotin biosynthesis; biotin from 7,8-diaminononanoate: step 1/2. In terms of biological role, catalyzes a mechanistically unusual reaction, the ATP-dependent insertion of CO2 between the N7 and N8 nitrogen atoms of 7,8-diaminopelargonic acid (DAPA, also called 7,8-diammoniononanoate) to form a ureido ring. This is ATP-dependent dethiobiotin synthetase BioD from Mannheimia succiniciproducens (strain KCTC 0769BP / MBEL55E).